Consider the following 226-residue polypeptide: Leucyl/phenylalanyl-tRNA--protein transferase (226 aa).

This sequence belongs to the L/F-transferase family.

It is found in the cytoplasm. It carries out the reaction N-terminal L-lysyl-[protein] + L-leucyl-tRNA(Leu) = N-terminal L-leucyl-L-lysyl-[protein] + tRNA(Leu) + H(+). The catalysed reaction is N-terminal L-arginyl-[protein] + L-leucyl-tRNA(Leu) = N-terminal L-leucyl-L-arginyl-[protein] + tRNA(Leu) + H(+). It catalyses the reaction L-phenylalanyl-tRNA(Phe) + an N-terminal L-alpha-aminoacyl-[protein] = an N-terminal L-phenylalanyl-L-alpha-aminoacyl-[protein] + tRNA(Phe). In terms of biological role, functions in the N-end rule pathway of protein degradation where it conjugates Leu, Phe and, less efficiently, Met from aminoacyl-tRNAs to the N-termini of proteins containing an N-terminal arginine or lysine. The protein is Leucyl/phenylalanyl-tRNA--protein transferase of Pseudomonas paraeruginosa (strain DSM 24068 / PA7) (Pseudomonas aeruginosa (strain PA7)).